Here is an 878-residue protein sequence, read N- to C-terminus: Phosphoenolpyruvate carboxylase (878 aa).

Catalysis depends on residues histidine 140 and lysine 545.

This sequence belongs to the PEPCase type 1 family. The cofactor is Mg(2+).

It carries out the reaction oxaloacetate + phosphate = phosphoenolpyruvate + hydrogencarbonate. Forms oxaloacetate, a four-carbon dicarboxylic acid source for the tricarboxylic acid cycle. The polypeptide is Phosphoenolpyruvate carboxylase (Pseudomonas paraeruginosa (strain DSM 24068 / PA7) (Pseudomonas aeruginosa (strain PA7))).